A 333-amino-acid polypeptide reads, in one-letter code: Phosphate acyltransferase (333 aa).

It belongs to the PlsX family. In terms of assembly, homodimer. Probably interacts with PlsY.

The protein resides in the cytoplasm. The enzyme catalyses a fatty acyl-[ACP] + phosphate = an acyl phosphate + holo-[ACP]. Its pathway is lipid metabolism; phospholipid metabolism. Functionally, catalyzes the reversible formation of acyl-phosphate (acyl-PO(4)) from acyl-[acyl-carrier-protein] (acyl-ACP). This enzyme utilizes acyl-ACP as fatty acyl donor, but not acyl-CoA. The sequence is that of Phosphate acyltransferase from Bacillus subtilis (strain 168).